A 382-amino-acid chain; its full sequence is Bestrophin-6 (382 aa).

Transmembrane regions (helical) follow at residues 29 to 49 (WKLI…VLAI), 68 to 88 (FINF…TTIV), 231 to 251 (LAYP…CAFA), and 265 to 285 (VIHY…MGWL).

This sequence belongs to the anion channel-forming bestrophin (TC 1.A.46) family. Calcium-sensitive chloride channel subfamily.

It is found in the membrane. This chain is Bestrophin-6 (best-6), found in Caenorhabditis elegans.